A 562-amino-acid polypeptide reads, in one-letter code: Probable sesquiterpene synthase (562 aa).

Positions 315, 319, and 467 each coordinate Mg(2+). Residues Asp315–Asp319 carry the DDXXD motif motif.

The protein belongs to the terpene synthase family. Tpsa subfamily. Mg(2+) serves as cofactor. It depends on Mn(2+) as a cofactor.

Sesquiterpene synthase. This chain is Probable sesquiterpene synthase (SesquiTPS), found in Santalum austrocaledonicum (Sandalwood).